A 434-amino-acid chain; its full sequence is Histidinol dehydrogenase (434 aa).

Residues E260 and H263 each coordinate Zn(2+). Residues E330 and H331 each act as proton acceptor in the active site. H423 is a binding site for Zn(2+).

Belongs to the histidinol dehydrogenase family. Zn(2+) is required as a cofactor.

The enzyme catalyses L-histidinol + 2 NAD(+) + H2O = L-histidine + 2 NADH + 3 H(+). Its pathway is amino-acid biosynthesis; L-histidine biosynthesis; L-histidine from 5-phospho-alpha-D-ribose 1-diphosphate: step 9/9. Its function is as follows. Catalyzes the sequential NAD-dependent oxidations of L-histidinol to L-histidinaldehyde and then to L-histidine. This chain is Histidinol dehydrogenase (hisD), found in Synechocystis sp. (strain ATCC 27184 / PCC 6803 / Kazusa).